Here is a 431-residue protein sequence, read N- to C-terminus: Adenylosuccinate synthetase (431 aa).

GTP contacts are provided by residues 12–18 (GDEGKGK) and 40–42 (GHT). Catalysis depends on Asp13, which acts as the Proton acceptor. Mg(2+) contacts are provided by Asp13 and Gly40. IMP contacts are provided by residues 13 to 16 (DEGK), 38 to 41 (NAGH), Thr129, Arg143, Gln224, and Thr239. Catalysis depends on His41, which acts as the Proton donor. An Isoglutamyl lysine isopeptide (Lys-Gln) (interchain with Q-Cter in protein Pup) cross-link involves residue Lys292. Substrate is bound at residue 299–305 (VTTGRAR). Residue Arg303 coordinates IMP. Residues Arg305, 331–333 (KLD), and 413–415 (GVG) contribute to the GTP site.

This sequence belongs to the adenylosuccinate synthetase family. In terms of assembly, homodimer. The cofactor is Mg(2+).

The protein resides in the cytoplasm. The enzyme catalyses IMP + L-aspartate + GTP = N(6)-(1,2-dicarboxyethyl)-AMP + GDP + phosphate + 2 H(+). Its pathway is purine metabolism; AMP biosynthesis via de novo pathway; AMP from IMP: step 1/2. Functionally, plays an important role in the de novo pathway of purine nucleotide biosynthesis. Catalyzes the first committed step in the biosynthesis of AMP from IMP. The sequence is that of Adenylosuccinate synthetase from Mycolicibacterium smegmatis (strain ATCC 700084 / mc(2)155) (Mycobacterium smegmatis).